The sequence spans 756 residues: Xylosyl- and glucuronyltransferase LARGE1 (756 aa).

Topologically, residues 1-10 (MLGICRGRRK) are cytoplasmic. Residues 11–31 (FLAASLSLLCIPAITWIYLFS) traverse the membrane as a helical; Signal-anchor for type II membrane protein segment. The Lumenal portion of the chain corresponds to 32–756 (GSFEDGKPVS…LKYLTAENNS (725 aa)). 2 disordered regions span residues 43–69 (SPLE…EVRM) and 81–109 (RQLS…EGTG). The span at 44 to 58 (PLESQAHSPRYTASS) shows a compositional bias: polar residues. A coiled-coil region spans residues 53–95 (RYTASSQRERESLEVRMREVEEENRALRRQLSLAQGRAPSHRR). Residues 59–69 (QRERESLEVRM) show a composition bias toward basic and acidic residues. 3 N-linked (GlcNAc...) asparagine glycosylation sites follow: Asn97, Asn122, and Asn148. The xylosyltransferase activity stretch occupies residues 138 to 413 (IHVAIVCAGY…FLEYDGNLLR (276 aa)). Mn(2+) is bound by residues Asp242 and Asp244. N-linked (GlcNAc...) asparagine glycosylation is present at Asn272. Residues 414 to 756 (RELFGCPSEA…LKYLTAENNS (343 aa)) form a glucuronyltransferase activity region. Residues Asp563 and Asp565 each contribute to the Mn(2+) site.

In the C-terminal section; belongs to the glycosyltransferase 49 family. This sequence in the N-terminal section; belongs to the glycosyltransferase 8 family. Interacts with DAG1 (via the N-terminal domain of alpha-DAG1); the interaction increases binding of DAG1 to laminin. Interacts with B4GAT1. Requires Mn(2+) as cofactor. As to expression, ubiquitous. Highest expression in heart, brain and skeletal muscle.

The protein localises to the golgi apparatus membrane. The catalysed reaction is 3-O-[beta-D-GlcA-(1-&gt;3)-beta-D-Xyl-(1-&gt;4)-Rib-ol-P-Rib-ol-P-3-beta-D-GalNAc-(1-&gt;3)-beta-D-GlcNAc-(1-&gt;4)-(O-6-P-alpha-D-Man)]-Thr-[protein] + UDP-alpha-D-xylose = 3-O-[alpha-D-Xyl-(1-&gt;3)-beta-D-GlcA-(1-&gt;4)-beta-D-Xyl-(1-&gt;4)-Rib-ol-P-Rib-ol-P-3-beta-D-GalNAc-(1-&gt;3)-beta-D-GlcNAc-(1-&gt;4)-(O-6-P-alpha-D-Man)]-Thr-[protein] + UDP + H(+). It catalyses the reaction 3-O-{(1-&gt;[3)-alpha-D-Xyl-(1-&gt;3)-beta-D-GlcA-(1-&gt;](n)-4)-beta-D-Xyl-(1-&gt;4)-Rib-ol-P-Rib-ol-P-3-beta-D-GalNAc-(1-&gt;3)-beta-D-GlcNAc-(1-&gt;4)-O-6-P-alpha-D-Man}-L-Thr-[protein] + UDP-alpha-D-glucuronate = 3-O-{beta-D-GlcA-(1-&gt;[3)-alpha-D-Xyl-(1-&gt;3)-beta-D-GlcA-(1-&gt;](n)-4)-beta-D-Xyl-(1-&gt;4)-Rib-ol-P-Rib-ol-P-3-beta-D-GalNAc-(1-&gt;3)-beta-D-GlcNAc-(1-&gt;4)-O-6-P-alpha-D-Man}-L-Thr-[protein] + UDP + H(+). It carries out the reaction 3-O-{beta-D-GlcA-(1-&gt;[3)-alpha-D-Xyl-(1-&gt;3)-beta-D-GlcA-(1-&gt;](n)-4)-beta-D-Xyl-(1-&gt;4)-Rib-ol-P-Rib-ol-P-3-beta-D-GalNAc-(1-&gt;3)-beta-D-GlcNAc-(1-&gt;4)-O-6-P-alpha-D-Man}-L-Thr-[protein] + UDP-alpha-D-xylose = 3-O-{(1-&gt;[3)-alpha-D-Xyl-(1-&gt;3)-beta-D-GlcA-(1-&gt;](n+1)-4)-beta-D-Xyl-(1-&gt;4)-Rib-ol-P-Rib-ol-P-3-beta-D-GalNAc-(1-&gt;3)-beta-D-GlcNAc-(1-&gt;4)-O-6-P-alpha-D-Man}-L-Thr-[protein] + UDP + H(+). It functions in the pathway protein modification; protein glycosylation. Its function is as follows. Bifunctional glycosyltransferase with both alpha-1,3-xylosyltransferase and beta-1,3-glucuronyltransferase activities involved in the maturation of alpha-dystroglycan (DAG1) by glycosylation leading to DAG1 binding to laminin G-like domain-containing extracellular proteins with high affinity. Elongates the glucuronyl-beta-1,4-xylose-beta disaccharide primer structure initiated by B4GAT1 by adding repeating units [-3-Xylose-alpha-1,3-GlcA-beta-1-] to produce a heteropolysaccharide. Requires the phosphorylation of core M3 (O-mannosyl trisaccharide) by POMK to elongate the glucuronyl-beta-1,4-xylose-beta disaccharide primer. Plays a key role in skeletal muscle function and regeneration. The polypeptide is Xylosyl- and glucuronyltransferase LARGE1 (Homo sapiens (Human)).